A 182-amino-acid polypeptide reads, in one-letter code: Large ribosomal subunit protein uL5c (182 aa).

The protein belongs to the universal ribosomal protein uL5 family. In terms of assembly, part of the 50S ribosomal subunit; contacts the 5S rRNA.

Its subcellular location is the plastid. The protein localises to the chloroplast. In terms of biological role, binds 5S rRNA, forms part of the central protuberance of the 50S subunit. The protein is Large ribosomal subunit protein uL5c (rpl5) of Emiliania huxleyi (Coccolithophore).